The primary structure comprises 838 residues: Protein translocase subunit SecA (838 aa).

ATP-binding positions include glutamine 86, 104–108 (GEGKT), and aspartate 493. Disordered regions lie at residues 517 to 536 (RRID…PGSS) and 789 to 838 (KVAE…CCGQ). Over residues 801 to 819 (TDGDSKAKRQPVRKKETVG) the composition is skewed to basic and acidic residues. Positions 824, 826, 835, and 836 each coordinate Zn(2+).

Belongs to the SecA family. Monomer and homodimer. Part of the essential Sec protein translocation apparatus which comprises SecA, SecYEG and auxiliary proteins SecDF. Other proteins may also be involved. Requires Zn(2+) as cofactor.

It localises to the cell membrane. Its subcellular location is the cytoplasm. It catalyses the reaction ATP + H2O + cellular proteinSide 1 = ADP + phosphate + cellular proteinSide 2.. Part of the Sec protein translocase complex. Interacts with the SecYEG preprotein conducting channel. Has a central role in coupling the hydrolysis of ATP to the transfer of proteins into and across the cell membrane, serving as an ATP-driven molecular motor driving the stepwise translocation of polypeptide chains across the membrane. The protein is Protein translocase subunit SecA of Halalkalibacterium halodurans (strain ATCC BAA-125 / DSM 18197 / FERM 7344 / JCM 9153 / C-125) (Bacillus halodurans).